Here is a 291-residue protein sequence, read N- to C-terminus: 4-diphosphocytidyl-2-C-methyl-D-erythritol kinase (291 aa).

The active site involves Lys-10. An ATP-binding site is contributed by 94–104 (PVSAGLAGGSS). Asp-136 is a catalytic residue.

The protein belongs to the GHMP kinase family. IspE subfamily.

It carries out the reaction 4-CDP-2-C-methyl-D-erythritol + ATP = 4-CDP-2-C-methyl-D-erythritol 2-phosphate + ADP + H(+). It participates in isoprenoid biosynthesis; isopentenyl diphosphate biosynthesis via DXP pathway; isopentenyl diphosphate from 1-deoxy-D-xylulose 5-phosphate: step 3/6. Functionally, catalyzes the phosphorylation of the position 2 hydroxy group of 4-diphosphocytidyl-2C-methyl-D-erythritol. In Listeria monocytogenes serotype 4a (strain HCC23), this protein is 4-diphosphocytidyl-2-C-methyl-D-erythritol kinase.